The following is a 215-amino-acid chain: Pyrrolidone-carboxylate peptidase (215 aa).

Active-site residues include Glu80, Cys143, and His167.

It belongs to the peptidase C15 family. Homotetramer.

Its subcellular location is the cytoplasm. It catalyses the reaction Release of an N-terminal pyroglutamyl group from a polypeptide, the second amino acid generally not being Pro.. Removes 5-oxoproline from various penultimate amino acid residues except L-proline. This Yersinia pseudotuberculosis serotype O:3 (strain YPIII) protein is Pyrrolidone-carboxylate peptidase.